The following is a 760-amino-acid chain: General transcription and DNA repair factor IIH helicase subunit XPD (760 aa).

Residues Gly7–Glu283 enclose the Helicase ATP-binding domain. Met42–Thr49 lines the ATP pocket. Positions 116, 134, 155, and 190 each coordinate [4Fe-4S] cluster. A DEAH box motif is present at residues Asp234–His237. Positions Met438–Leu637 are mediates interaction with MMS19. Positions Lys682–Arg695 match the Nuclear localization signal motif.

This sequence belongs to the helicase family. RAD3/XPD subfamily. As to quaternary structure, component of the 7-subunit TFIIH core complex composed of XPB/ERCC3, XPD/ERCC2, GTF2H1, GTF2H2, GTF2H3, GTF2H4 and GTF2H5, which is active in NER. The core complex associates with the 3-subunit CDK-activating kinase (CAK) module composed of CCNH/cyclin H, CDK7 and MNAT1 to form the 10-subunit holoenzyme (holo-TFIIH) active in transcription. The interaction with GTF2H2 results in the stimulation of the 5'--&gt;3' helicase activity. Component of the MMXD complex, which includes CIAO1, ERCC2, CIAO2B, MMS19 and SLC25A5. Interacts with CIAO1 and CIAO2B; the interaction WITH CIAO2B is direct. Interacts with ATF7IP. Interacts directly with MMS19. Part of TBP-based Pol II pre-initiation complex (PIC), in which Pol II core assembles with general transcription factors and other specific initiation factors including GTF2E1, GTF2E2, GTF2F1, GTF2F2, TCEA1, ERCC2, ERCC3, GTF2H2, GTF2H3, GTF2H4, GTF2H5, GTF2A1, GTF2A2, GTF2B and TBP; this large multi-subunit PIC complex mediates DNA unwinding and targets Pol II core to the transcription start site where the first phosphodiester bond forms. It depends on Mg(2+) as a cofactor. [4Fe-4S] cluster serves as cofactor. ISGylated.

It localises to the nucleus. It is found in the cytoplasm. The protein resides in the cytoskeleton. Its subcellular location is the spindle. It catalyses the reaction Couples ATP hydrolysis with the unwinding of duplex DNA at the replication fork by translocating in the 5'-3' direction. This creates two antiparallel DNA single strands (ssDNA). The leading ssDNA polymer is the template for DNA polymerase III holoenzyme which synthesizes a continuous strand.. It carries out the reaction ATP + H2O = ADP + phosphate + H(+). In terms of biological role, ATP-dependent 5'-3' DNA helicase, component of the general transcription and DNA repair factor IIH (TFIIH) core complex, which is involved in general and transcription-coupled nucleotide excision repair (NER) of damaged DNA and, when complexed to CDK-activating kinase (CAK), involved in transcription by RNA polymerase II. In NER, TFIIH acts by opening DNA around the lesion to allow the excision of the damaged oligonucleotide and its replacement by a new DNA fragment. The ATP-dependent helicase activity of XPD/ERCC2 is required for DNA opening. In transcription, TFIIH has an essential role in transcription initiation. When the pre-initiation complex (PIC) has been established, TFIIH is required for promoter opening and promoter escape. Phosphorylation of the C-terminal tail (CTD) of the largest subunit of RNA polymerase II by the kinase module CAK controls the initiation of transcription. XPD/ERCC2 acts by forming a bridge between CAK and the core-TFIIH complex. Involved in the regulation of vitamin-D receptor activity. As part of the mitotic spindle-associated MMXD complex it plays a role in chromosome segregation. Might have a role in aging process and could play a causative role in the generation of skin cancers. The protein is General transcription and DNA repair factor IIH helicase subunit XPD (ERCC2) of Bos taurus (Bovine).